The primary structure comprises 339 residues: Ribosomal RNA small subunit methyltransferase C (339 aa).

It belongs to the methyltransferase superfamily. RsmC family. Monomer.

Its subcellular location is the cytoplasm. The enzyme catalyses guanosine(1207) in 16S rRNA + S-adenosyl-L-methionine = N(2)-methylguanosine(1207) in 16S rRNA + S-adenosyl-L-homocysteine + H(+). Its function is as follows. Specifically methylates the guanine in position 1207 of 16S rRNA in the 30S particle. The polypeptide is Ribosomal RNA small subunit methyltransferase C (Aliivibrio salmonicida (strain LFI1238) (Vibrio salmonicida (strain LFI1238))).